The primary structure comprises 428 residues: MVETAVILAGGEGNRLKPLTEEVPKALLKVAGRELLYRTIKQLQDVGVKNFVIVVNKKFEGKVKAFLKEHNFEAEVIPNEHPEKENGYSLYLAKGRIKGEFAVVMSDHIYEKAFLEKAVEGKGLIVDRLGLYINKNEATKVKCEEGRIKYIGKNLEKYDGFDTGFFVLDESIFEVAEEALKEQKKLTMSELAKRAQIPCTEVSGYFWMDVDTPEDVEKAKKYLVKTAIKGVGDGFISRNLNRKVSTRISPYLVDKFTPNQLTVLTFLLGMFSALVAYFSPALGGILLQINSMLDGLDGEVARAQMRTTKFGAWLDSVLDRYVDFAFLSALAMHLKPSWDFMPWVFAALFGSVMVSYSTERYKGAYCEDAYAVIKELRYLLGKRDERIFMIMIFTILGWIKALFVVLAIITNLRVILTIYLVWKKKGNV.

The mobA-like NTP transferase stretch occupies residues 2-227; it reads VETAVILAGG…KAKKYLVKTA (226 aa). Residues 8-10, lysine 25, glutamate 80, and glutamate 116 each bind CTP; that span reads LAG. Glutamate 116 lines the Mg(2+) pocket. The interval 228–425 is CDP-alcohol phosphatidyltransferases; sequence IKGVGDGFIS…LTIYLVWKKK (198 aa). 3 consecutive transmembrane segments (helical) span residues 266-286, 336-356, and 389-409; these read FLLG…GGIL, PSWD…MVSY, and MIMI…LAII.

In the N-terminal section; belongs to the MobA family. This sequence in the C-terminal section; belongs to the CDP-alcohol phosphatidyltransferase class-I family. Mg(2+) is required as a cofactor.

It is found in the membrane. The catalysed reaction is 1D-myo-inositol 3-phosphate + CTP + H(+) = CDP-1L-myo-inositol + diphosphate. It catalyses the reaction CDP-1L-myo-inositol + 1D-myo-inositol 3-phosphate = bis(1L-myo-inositol) 3,1'-phosphate 1-phosphate + CMP + H(+). Involved in biosynthesis of di-myo-inositol phosphate (DIP), a widespread organic solute in microorganisms adapted to hot environments. Catalyzes the condensation of CTP and L-myo-inositol-1-phosphate into CDP-L-myo-inositol, as well as the biosynthesis of di-myo-inositol-1,3'-phosphate-1'-phosphate (DIPP) from CDP-L-myo-inositol and L-myo-inositol-1-phosphate. The chain is Bifunctional IPC transferase and DIPP synthase (spsI) from Aquifex aeolicus (strain VF5).